Reading from the N-terminus, the 254-residue chain is Probable phosphomannomutase (254 aa).

Asp14 functions as the Nucleophile in the catalytic mechanism. Asp14 and Asp16 together coordinate Mg(2+). Asp16 acts as the Proton donor/acceptor in catalysis. 6 residues coordinate alpha-D-mannose 1-phosphate: Arg23, Arg129, Arg140, Arg147, Ser185, and Asp187. 4 residues coordinate Mg(2+): Asp214, Phe226, Asp228, and Thr231.

It belongs to the eukaryotic PMM family. In terms of assembly, homodimer.

The protein resides in the cytoplasm. The catalysed reaction is alpha-D-mannose 1-phosphate = D-mannose 6-phosphate. The protein operates within nucleotide-sugar biosynthesis; GDP-alpha-D-mannose biosynthesis; alpha-D-mannose 1-phosphate from D-fructose 6-phosphate: step 2/2. Involved in the synthesis of the GDP-mannose and dolichol-phosphate-mannose required for a number of critical mannosyl transfer reactions. In Caenorhabditis elegans, this protein is Probable phosphomannomutase.